A 641-amino-acid polypeptide reads, in one-letter code: Chaperone protein DnaK (641 aa).

At T199 the chain carries Phosphothreonine; by autocatalysis. The segment at 603–627 (YGQQQAEGGAQAAGAAGGSSKADDA) is disordered. The span at 604–616 (GQQQAEGGAQAAG) shows a compositional bias: low complexity.

Belongs to the heat shock protein 70 family.

In terms of biological role, acts as a chaperone. The sequence is that of Chaperone protein DnaK from Azoarcus sp. (strain BH72).